A 139-amino-acid polypeptide reads, in one-letter code: Actin-depolymerizing factor 3 (139 aa).

The ADF-H domain occupies Gly7 to Arg139.

It belongs to the actin-binding proteins ADF family. In terms of tissue distribution, expressed in all tissues except pollen.

Its subcellular location is the cytoplasm. Its function is as follows. Actin-depolymerizing protein. Severs actin filaments (F-actin) and binds to actin monomers. The protein is Actin-depolymerizing factor 3 (ADF3) of Zea mays (Maize).